We begin with the raw amino-acid sequence, 858 residues long: Taste receptor type 1 member 3 (858 aa).

The N-terminal stretch at 1-20 (MPGLAILGLSLAAFLELGMG) is a signal peptide. At 21–575 (SSLCLSQQFK…FLAWGEPAVL (555 aa)) the chain is on the extracellular side. N-linked (GlcNAc...) asparagine glycans are attached at residues N85, N130, N203, N264, N379, N387, N418, N439, and N482. A helical membrane pass occupies residues 576-596 (SLLLLLCLVLGLTLAALGLFV). The Cytoplasmic segment spans residues 597–610 (HYWDSPLVQASGGS). A helical transmembrane segment spans residues 611–631 (LFCFGLICLGLFCLSVLLFPG). Over 632 to 644 (RPRSASCLAQQPM) the chain is Extracellular. The helical transmembrane segment at 645-665 (AHLPLTGCLSTLFLQAAEIFV) threads the bilayer. Topologically, residues 666–687 (ESELPLSWANWLCSYLRGPWAW) are cytoplasmic. A helical transmembrane segment spans residues 688–708 (LVVLLATLVEAALCAWYLMAF). Over 709 to 735 (PPEVVTDWQVLPTEVLEHCRMRSWVSL) the chain is Extracellular. The helical transmembrane segment at 736–756 (GLVHITNAVLAFLCFLGTFLV) threads the bilayer. The Cytoplasmic segment spans residues 757–767 (QSQPGRYNRAR). A helical membrane pass occupies residues 768-788 (GLTFAMLAYFIIWVSFVPLLA). The Extracellular portion of the chain corresponds to 789 to 796 (NVQVAYQP). A helical transmembrane segment spans residues 797 to 817 (AVQMGAILFCALGILATFHLP). Residues 818-858 (KCYVLLWLPELNTQEFFLGRSPKEASDGNSGSSEATRGHSE) lie on the Cytoplasmic side of the membrane. Residues 839-858 (PKEASDGNSGSSEATRGHSE) are disordered.

It belongs to the G-protein coupled receptor 3 family. TAS1R subfamily. Forms homodimers or heterodimers with TAS1R1 and TAS1R2.

The protein localises to the cell membrane. Functionally, putative taste receptor. TAS1R1/TAS1R3 responds to the umami taste stimulus (the taste of monosodium glutamate) and also to most of the 20 standard L-amino acids, but not to their D-enantiomers or other compounds. TAS1R2/TAS1R3 recognizes diverse natural and synthetic sweeteners. TAS1R3 is essential for the recognition and response to the disaccharide trehalose. Sequence differences within and between species can significantly influence the selectivity and specificity of taste responses. This Rattus norvegicus (Rat) protein is Taste receptor type 1 member 3 (Tas1r3).